A 548-amino-acid chain; its full sequence is Phenylalanine--tRNA ligase beta subunit (548 aa).

One can recognise a B5 domain in the interval 271-346 (LSEAAAKLDP…ISIGYEALGP (76 aa)). The Mg(2+) site is built by Asp-324, Asp-330, Glu-333, and Asp-334.

It belongs to the phenylalanyl-tRNA synthetase beta subunit family. Type 2 subfamily. Tetramer of two alpha and two beta subunits. The cofactor is Mg(2+).

The protein localises to the cytoplasm. It catalyses the reaction tRNA(Phe) + L-phenylalanine + ATP = L-phenylalanyl-tRNA(Phe) + AMP + diphosphate + H(+). This Aeropyrum pernix (strain ATCC 700893 / DSM 11879 / JCM 9820 / NBRC 100138 / K1) protein is Phenylalanine--tRNA ligase beta subunit.